The following is a 122-amino-acid chain: U1 small nuclear ribonucleoprotein C (122 aa).

A Matrin-type zinc finger spans residues tyrosine 4 to methionine 36.

The protein belongs to the U1 small nuclear ribonucleoprotein C family. U1 snRNP is composed of the 7 core Sm proteins B/B', D1, D2, D3, E, F and G that assemble in a heptameric protein ring on the Sm site of the small nuclear RNA to form the core snRNP, and at least 3 U1 snRNP-specific proteins U1-70K, U1-A and U1-C. U1-C interacts with U1 snRNA and the 5' splice-site region of the pre-mRNA.

Its subcellular location is the nucleus. Functionally, component of the spliceosomal U1 snRNP, which is essential for recognition of the pre-mRNA 5' splice-site and the subsequent assembly of the spliceosome. U1-C is directly involved in initial 5' splice-site recognition for both constitutive and regulated alternative splicing. The interaction with the 5' splice-site seems to precede base-pairing between the pre-mRNA and the U1 snRNA. Stimulates commitment or early (E) complex formation by stabilizing the base pairing of the 5' end of the U1 snRNA and the 5' splice-site region. The chain is U1 small nuclear ribonucleoprotein C from Ciona intestinalis (Transparent sea squirt).